Reading from the N-terminus, the 161-residue chain is MIMRILGIDPGLANVGWGILDRKGSKYMYVQDGTVITHPFMSLKDRLKLISDEIILIIDNFKPDVASIENIYFAKNKKTAISVSEARGAIILTFALKNLDFYEYTPIQVKNSISGFGRIEKVQVKYVIRILLGMKPDFIFTSDHSSDALALAICHGNYHIL.

Residues Asp9, Glu69, and His144 contribute to the active site. Mg(2+) contacts are provided by Asp9, Glu69, and His144.

The protein belongs to the RuvC family. Homodimer which binds Holliday junction (HJ) DNA. The HJ becomes 2-fold symmetrical on binding to RuvC with unstacked arms; it has a different conformation from HJ DNA in complex with RuvA. In the full resolvosome a probable DNA-RuvA(4)-RuvB(12)-RuvC(2) complex forms which resolves the HJ. The cofactor is Mg(2+).

The protein localises to the cytoplasm. The catalysed reaction is Endonucleolytic cleavage at a junction such as a reciprocal single-stranded crossover between two homologous DNA duplexes (Holliday junction).. The RuvA-RuvB-RuvC complex processes Holliday junction (HJ) DNA during genetic recombination and DNA repair. Endonuclease that resolves HJ intermediates. Cleaves cruciform DNA by making single-stranded nicks across the HJ at symmetrical positions within the homologous arms, yielding a 5'-phosphate and a 3'-hydroxyl group; requires a central core of homology in the junction. The consensus cleavage sequence is 5'-(A/T)TT(C/G)-3'. Cleavage occurs on the 3'-side of the TT dinucleotide at the point of strand exchange. HJ branch migration catalyzed by RuvA-RuvB allows RuvC to scan DNA until it finds its consensus sequence, where it cleaves and resolves the cruciform DNA. This is Crossover junction endodeoxyribonuclease RuvC from Borrelia turicatae (strain 91E135).